Reading from the N-terminus, the 352-residue chain is Molybdenum import ATP-binding protein ModC (352 aa).

The region spanning 1 to 229 is the ABC transporter domain; sequence MLELNFSQTL…SVMHPWLPKE (229 aa). Residue 31–38 participates in ATP binding; that stretch reads GVSGAGKT. A Mop domain is found at 289-352; it reads QTSIRNVLRA…AQVKSVSITA (64 aa).

Belongs to the ABC transporter superfamily. Molybdate importer (TC 3.A.1.8) family. In terms of assembly, the complex is composed of two ATP-binding proteins (ModC), two transmembrane proteins (ModB) and a solute-binding protein (ModA).

The protein resides in the cell inner membrane. It catalyses the reaction molybdate(out) + ATP + H2O = molybdate(in) + ADP + phosphate + H(+). Functionally, part of the ABC transporter complex ModABC involved in molybdenum import. Responsible for energy coupling to the transport system. The protein is Molybdenum import ATP-binding protein ModC of Salmonella paratyphi A (strain ATCC 9150 / SARB42).